Consider the following 267-residue polypeptide: 4-hydroxy-tetrahydrodipicolinate reductase (267 aa).

NAD(+) contacts are provided by residues 8-13 (GAAGRM) and aspartate 34. Arginine 35 is a binding site for NADP(+). NAD(+) contacts are provided by residues 98 to 100 (GTT) and 122 to 125 (AANF). The active-site Proton donor/acceptor is the histidine 155. Histidine 156 is a binding site for (S)-2,3,4,5-tetrahydrodipicolinate. Lysine 159 (proton donor) is an active-site residue. 165-166 (GT) contributes to the (S)-2,3,4,5-tetrahydrodipicolinate binding site.

This sequence belongs to the DapB family.

Its subcellular location is the cytoplasm. The catalysed reaction is (S)-2,3,4,5-tetrahydrodipicolinate + NAD(+) + H2O = (2S,4S)-4-hydroxy-2,3,4,5-tetrahydrodipicolinate + NADH + H(+). It catalyses the reaction (S)-2,3,4,5-tetrahydrodipicolinate + NADP(+) + H2O = (2S,4S)-4-hydroxy-2,3,4,5-tetrahydrodipicolinate + NADPH + H(+). Its pathway is amino-acid biosynthesis; L-lysine biosynthesis via DAP pathway; (S)-tetrahydrodipicolinate from L-aspartate: step 4/4. In terms of biological role, catalyzes the conversion of 4-hydroxy-tetrahydrodipicolinate (HTPA) to tetrahydrodipicolinate. This chain is 4-hydroxy-tetrahydrodipicolinate reductase, found in Pseudomonas putida (strain GB-1).